Consider the following 373-residue polypeptide: UDP-N-acetylglucosamine--N-acetylmuramyl-(pentapeptide) pyrophosphoryl-undecaprenol N-acetylglucosamine transferase (373 aa).

Residues 15–17, N126, R170, S198, and Q300 each bind UDP-N-acetyl-alpha-D-glucosamine; that span reads TGG.

The protein belongs to the glycosyltransferase 28 family. MurG subfamily.

The protein resides in the cell inner membrane. The enzyme catalyses di-trans,octa-cis-undecaprenyl diphospho-N-acetyl-alpha-D-muramoyl-L-alanyl-D-glutamyl-meso-2,6-diaminopimeloyl-D-alanyl-D-alanine + UDP-N-acetyl-alpha-D-glucosamine = di-trans,octa-cis-undecaprenyl diphospho-[N-acetyl-alpha-D-glucosaminyl-(1-&gt;4)]-N-acetyl-alpha-D-muramoyl-L-alanyl-D-glutamyl-meso-2,6-diaminopimeloyl-D-alanyl-D-alanine + UDP + H(+). Its pathway is cell wall biogenesis; peptidoglycan biosynthesis. In terms of biological role, cell wall formation. Catalyzes the transfer of a GlcNAc subunit on undecaprenyl-pyrophosphoryl-MurNAc-pentapeptide (lipid intermediate I) to form undecaprenyl-pyrophosphoryl-MurNAc-(pentapeptide)GlcNAc (lipid intermediate II). This Methylobacterium nodulans (strain LMG 21967 / CNCM I-2342 / ORS 2060) protein is UDP-N-acetylglucosamine--N-acetylmuramyl-(pentapeptide) pyrophosphoryl-undecaprenol N-acetylglucosamine transferase.